Reading from the N-terminus, the 109-residue chain is Parvalbumin alpha (109 aa).

EF-hand domains follow at residues 38-73 (KSKE…FTPE) and 77-109 (LSDK…VSES). Ca(2+) is bound by residues Asp51, Asp53, Ser55, Phe57, Glu59, Glu62, Asp90, Asp92, Asp94, Lys96, and Glu101.

The protein belongs to the parvalbumin family.

In muscle, parvalbumin is thought to be involved in relaxation after contraction. It binds two calcium ions. The protein is Parvalbumin alpha of Pelophylax lessonae (Pool frog).